The following is a 314-amino-acid chain: Basic endochitinase (314 aa).

Positions 1 to 20 are cleaved as a signal peptide; that stretch reads MGLWALVAFCLLSLILVGSA. Residues 21-61 form the Chitin-binding type-1 domain; sequence EQCGGQAGGRVCPGGACCSKFGWCGNTADYCGSGCQSQCSS. 7 disulfides stabilise this stretch: cysteine 23–cysteine 38, cysteine 32–cysteine 44, cysteine 37–cysteine 51, cysteine 55–cysteine 59, cysteine 86–cysteine 148, cysteine 160–cysteine 168, and cysteine 267–cysteine 299. Glutamate 130 serves as the catalytic Proton donor.

Belongs to the glycosyl hydrolase 19 family. Chitinase class I subfamily.

The catalysed reaction is Random endo-hydrolysis of N-acetyl-beta-D-glucosaminide (1-&gt;4)-beta-linkages in chitin and chitodextrins.. Its function is as follows. Defense against chitin-containing fungal pathogens. This is Basic endochitinase (CHIT1B) from Vitis vinifera (Grape).